Reading from the N-terminus, the 436-residue chain is MVLPTVAIVGRPNVGKSTLFNRIAGERISIVEDVEGVTRDRIYTTGEWLNRKFSLIDTGGIDDVDAPFMEQIKHQADIAMTEADVIVFVVSGKEGVTDADEYVSLILYKTNKPVILAVNKVDNPEMRNDIYDFYSLGLGDPYPLSSVHGIGTGDILDAIVENLPVEEENENPDIIRFSLIGRPNVGKSSLINAILGEDRVIASPVAGTTRDAIDTNFVDSQGQEYTMIDTAGMRKSGKVYENTEKYSVMRSMRAIDRSDVVLMVINAEEGIREYDKRIAGFAHEAGKGIIIVVNKWDTIEKDSHTVSQWEADIRDNFQFLSYAPIIFVSAETKQRLHKLPDMIKRISESQNKRIPSAVLNDVIMDAIAINPTPTDKGKRLKIFYATQVAVKPPTFVVFVNEEELMHFSYLRFLENQIREAFVFEGTPINLIARKRK.

2 EngA-type G domains span residues 4 to 167 (PTVA…PVEE) and 175 to 351 (IRFS…ESQN). Residues 10 to 17 (GRPNVGKS), 57 to 61 (DTGGI), 119 to 122 (NKVD), 181 to 188 (GRPNVGKS), 229 to 233 (DTAGM), and 294 to 297 (NKWD) each bind GTP. A KH-like domain is found at 352-436 (KRIPSAVLND…PINLIARKRK (85 aa)).

Belongs to the TRAFAC class TrmE-Era-EngA-EngB-Septin-like GTPase superfamily. EngA (Der) GTPase family. Associates with the 50S ribosomal subunit.

GTPase that plays an essential role in the late steps of ribosome biogenesis. The protein is GTPase Der of Streptococcus agalactiae serotype III (strain NEM316).